The sequence spans 123 residues: Methicillin resistance regulatory protein MecI (123 aa).

Positions 7–71 form a DNA-binding region, H-T-H motif; it reads EISSAEWEVM…KDNKIFQYYS (65 aa). Residues 74-123 form an important for dimerization region; the sequence is EESDIKYKTSKNFINKVYKGGFNSLVLNFVEKEDLSQDEIEELRNILNKK.

The protein belongs to the BlaI transcriptional regulatory family. Monomer and homodimer. Post-translationally, upon exposure to beta-lactams, proteolytic cleavage at a single site impairs dimerization and abolishes repressor activity.

The protein resides in the cytoplasm. In terms of biological role, transcriptional repressor that constitutively blocks the transcription of the gene for the penicillin-binding protein MecA. Binds palindromic DNA with the sequence 5'-TACA-[AT]-N-TGTA-3'. Regulates genes involved in antibiotic resistance. Binds DNA as a dimer. This is Methicillin resistance regulatory protein MecI (mecI) from Staphylococcus aureus (strain N315).